The following is a 242-amino-acid chain: NAD(P)H-quinone oxidoreductase subunit K (242 aa).

4 residues coordinate [4Fe-4S] cluster: C59, C60, C124, and C155.

This sequence belongs to the complex I 20 kDa subunit family. In terms of assembly, NDH-1 can be composed of about 15 different subunits; different subcomplexes with different compositions have been identified which probably have different functions. It depends on [4Fe-4S] cluster as a cofactor.

Its subcellular location is the cellular thylakoid membrane. The enzyme catalyses a plastoquinone + NADH + (n+1) H(+)(in) = a plastoquinol + NAD(+) + n H(+)(out). It catalyses the reaction a plastoquinone + NADPH + (n+1) H(+)(in) = a plastoquinol + NADP(+) + n H(+)(out). Functionally, NDH-1 shuttles electrons from an unknown electron donor, via FMN and iron-sulfur (Fe-S) centers, to quinones in the respiratory and/or the photosynthetic chain. The immediate electron acceptor for the enzyme in this species is believed to be plastoquinone. Couples the redox reaction to proton translocation, and thus conserves the redox energy in a proton gradient. Cyanobacterial NDH-1 also plays a role in inorganic carbon-concentration. This Synechococcus sp. (strain RCC307) protein is NAD(P)H-quinone oxidoreductase subunit K.